Consider the following 227-residue polypeptide: Ribose-5-phosphate isomerase A (227 aa).

Residues 26–29 (TGST), 82–85 (DGAD), and 95–98 (KGGG) each bind substrate. The active-site Proton acceptor is glutamate 104. Lysine 122 serves as a coordination point for substrate.

It belongs to the ribose 5-phosphate isomerase family. In terms of assembly, homodimer.

It catalyses the reaction aldehydo-D-ribose 5-phosphate = D-ribulose 5-phosphate. Its pathway is carbohydrate degradation; pentose phosphate pathway; D-ribose 5-phosphate from D-ribulose 5-phosphate (non-oxidative stage): step 1/1. Catalyzes the reversible conversion of ribose-5-phosphate to ribulose 5-phosphate. In Streptococcus pneumoniae (strain Hungary19A-6), this protein is Ribose-5-phosphate isomerase A.